Reading from the N-terminus, the 237-residue chain is Cytosolic-abundant heat soluble protein 86272 (237 aa).

A disordered region spans residues phenylalanine 96–arginine 125. Basic and acidic residues predominate over residues arginine 111–arginine 125. The stretch at lysine 115–alanine 193 forms a coiled coil. CAHS motif regions lie at residues tyrosine 124–glutamine 142 and glutamine 161–glutamate 179. The span at alanine 204–serine 215 shows a compositional bias: low complexity. The segment at alanine 204 to phenylalanine 237 is disordered. Residues glutamate 216–phenylalanine 237 show a composition bias toward basic and acidic residues.

It belongs to the Cytosolic-abundant heat soluble protein (CAHS) family.

The protein localises to the cytoplasm. CAHS proteins are cytosolic heat soluble proteins that seem to contribute to the anhydrobiosis in tardigrades, but their specific mechanisms are yet to be identified. It is possible that protection during anhydrobiosis might occur via the stabilization of vitrifying small molecules such as sugars, but not via the direct glass transition of CAHS proteins themselves. The sequence is that of Cytosolic-abundant heat soluble protein 86272 from Hypsibius exemplaris (Freshwater tardigrade).